The following is a 387-amino-acid chain: Exodeoxyribonuclease 7 large subunit (387 aa).

It belongs to the XseA family. As to quaternary structure, heterooligomer composed of large and small subunits.

Its subcellular location is the cytoplasm. It catalyses the reaction Exonucleolytic cleavage in either 5'- to 3'- or 3'- to 5'-direction to yield nucleoside 5'-phosphates.. Bidirectionally degrades single-stranded DNA into large acid-insoluble oligonucleotides, which are then degraded further into small acid-soluble oligonucleotides. The protein is Exodeoxyribonuclease 7 large subunit of Campylobacter jejuni subsp. jejuni serotype O:2 (strain ATCC 700819 / NCTC 11168).